The following is a 419-amino-acid chain: MDKLTIKASNPLAGEVVISGAKNAALPILMAGVLAETDFIVSNVPSLRDVITSCELLRCLGAEVEDLGGSRIRISTTNLNEYCAPYDLVKTMRASILILGPLLARYGTADVSLPGGCAIGARPVNLHLHGLELMGAKIEVKEGYIKARVDGRLKGTHIFMDMVSVGATENLLMAAALADGTTVIENAAREPEVTDLAHCLIAMGAKITGIGTATLKIEGVERLSGCEYRVMPDRIETGSFLVAAAVTRGKIRCVSADPSALEAVLSKLEDAGAEITTGEDWIELDMKGQRPKSVNIKTAPYPAFPTDMQAQFCVLNALAEGTGRVTETIFENRFMHVPELIRMGADIEQEGNTCIIHGIDRLNGAQVMATDLRASASLVIAGLMAEGTTTVDRIYHLDRGYEHIEAKFQGLGAEVVRVK.

22 to 23 provides a ligand contact to phosphoenolpyruvate; that stretch reads KN. Residue R93 participates in UDP-N-acetyl-alpha-D-glucosamine binding. Catalysis depends on C117, which acts as the Proton donor. 2-(S-cysteinyl)pyruvic acid O-phosphothioketal is present on C117. Residues D307 and I329 each coordinate UDP-N-acetyl-alpha-D-glucosamine.

Belongs to the EPSP synthase family. MurA subfamily.

Its subcellular location is the cytoplasm. It catalyses the reaction phosphoenolpyruvate + UDP-N-acetyl-alpha-D-glucosamine = UDP-N-acetyl-3-O-(1-carboxyvinyl)-alpha-D-glucosamine + phosphate. It functions in the pathway cell wall biogenesis; peptidoglycan biosynthesis. Its function is as follows. Cell wall formation. Adds enolpyruvyl to UDP-N-acetylglucosamine. The sequence is that of UDP-N-acetylglucosamine 1-carboxyvinyltransferase from Shewanella frigidimarina (strain NCIMB 400).